The sequence spans 267 residues: Outer membrane protein assembly factor BamD (267 aa).

An N-terminal signal peptide occupies residues Met-1–Ala-16. A lipid anchor (N-palmitoyl cysteine) is attached at Cys-17. Cys-17 carries the S-diacylglycerol cysteine lipid modification.

It belongs to the BamD family. In terms of assembly, part of the Bam complex.

The protein localises to the cell outer membrane. Functionally, part of the outer membrane protein assembly complex, which is involved in assembly and insertion of beta-barrel proteins into the outer membrane. Required for efficient transformation of Neisseria meningitidis by species-related DNA. The chain is Outer membrane protein assembly factor BamD from Neisseria meningitidis serogroup B (strain ATCC BAA-335 / MC58).